The sequence spans 318 residues: MQRANHSTVTQFILVGFSVFPHLQLMLFLLFLLMYLFTLLGNLLIMATVWSERSLHTPMYLFLCALSVSEILYTVAIIPRMLADLLSTQRSIAFLACASQMFFSFSFGFTHSFLLTVMGYDRYVAICHPLRYNVLMSPRGCACLVGCSWAGGLVMGMVVTSAIFHLAFCGHKEIHHFACHVPPLLKLACGDDVLVVAKGVGLVCITALLGCFLLILLSYAFIVAAILKIPSAEGRNKAFSTCASHLTVVVVHYGFASVIYLKPKSPQSLEGDTLMGITYTVLTPFLSPIIFSLRNKELKVAMKKTFFSKLYPEKNVMM.

Over 1 to 25 the chain is Extracellular; it reads MQRANHSTVTQFILVGFSVFPHLQL. N5 is a glycosylation site (N-linked (GlcNAc...) asparagine). A helical transmembrane segment spans residues 26–46; sequence MLFLLFLLMYLFTLLGNLLIM. The Cytoplasmic segment spans residues 47 to 54; the sequence is ATVWSERS. Residues 55–75 form a helical membrane-spanning segment; it reads LHTPMYLFLCALSVSEILYTV. Residues 76 to 99 are Extracellular-facing; sequence AIIPRMLADLLSTQRSIAFLACAS. C97 and C189 are oxidised to a cystine. Residues 100–120 traverse the membrane as a helical segment; sequence QMFFSFSFGFTHSFLLTVMGY. At 121-139 the chain is on the cytoplasmic side; the sequence is DRYVAICHPLRYNVLMSPR. A helical membrane pass occupies residues 140–160; the sequence is GCACLVGCSWAGGLVMGMVVT. At 161–197 the chain is on the extracellular side; that stretch reads SAIFHLAFCGHKEIHHFACHVPPLLKLACGDDVLVVA. Residues 198 to 218 form a helical membrane-spanning segment; that stretch reads KGVGLVCITALLGCFLLILLS. At 219–238 the chain is on the cytoplasmic side; it reads YAFIVAAILKIPSAEGRNKA. The chain crosses the membrane as a helical span at residues 239–259; that stretch reads FSTCASHLTVVVVHYGFASVI. Topologically, residues 260-272 are extracellular; sequence YLKPKSPQSLEGD. A helical membrane pass occupies residues 273–293; it reads TLMGITYTVLTPFLSPIIFSL. The Cytoplasmic segment spans residues 294–318; it reads RNKELKVAMKKTFFSKLYPEKNVMM.

The protein belongs to the G-protein coupled receptor 1 family.

Its subcellular location is the cell membrane. Odorant receptor. The chain is Olfactory receptor 10H1 (OR10H1) from Homo sapiens (Human).